Here is a 254-residue protein sequence, read N- to C-terminus: UstYa family oxidase phomYc' (254 aa).

The helical transmembrane segment at 38 to 58 threads the bilayer; that stretch reads LVLVLQSVLIISLLASLHILG. Residue Asn64 is glycosylated (N-linked (GlcNAc...) asparagine). The short motif at 138–142 is the HXXHC 1 element; the sequence is HQLHC. Residue Asn159 is glycosylated (N-linked (GlcNAc...) asparagine). Positions 173 to 177 match the HXXHC 2 motif; that stretch reads HIDHC.

It belongs to the ustYa family.

It localises to the membrane. It participates in mycotoxin biosynthesis. Its function is as follows. UstYa family oxidase; part of the gene cluster that mediates the biosynthesis of the phomopsins, a group of hexapeptide mycotoxins which infects lupins and causes lupinosis disease in livestock. Within the pathway, phomYc' catalyzes the desaturation of the Ile moiety into 2,3-dehydroisoleucine (dIle). The pathway starts with the processing of the precursor phomA' by several endopeptidases including kexin proteases as well as the cluster-specific S41 family peptidase phomP1 and the oligopeptidase phomG' to produce 10 identical copies of the hexapeptide Tyr-Val-Ile-Pro-Ile-Asp. After being excised from the precursor peptide, the core peptides are cyclized and modified post-translationally by enzymes encoded within the gene cluster. The timing and order of proteolysis of the phomA' precursor and PTMs are still unknown. Two tyrosinase-like enzymes, phomQ1' and phomQ2, catalyze the chlorination and hydroxylation of Tyr, respectively. PhomYb, is proposed to be involved in the construction of the macrocyclic structure. The other 4 ustYa family proteins may be involved in PTMs that generate the unique structure of phomopsin A. PhomYa' is required for the hydroxylation of C-beta of Tyr. PhomYc', phomYd', and phomYe are responsible for the biosynthesis of 2,3-dehydroisoleucine (dIle), 2,3-dehydroaspartic acid (dAsp), and 3,4-dehydroproline (dPro), respectively. While dIle formation by phomYc' is indispensable for the installation of dAsp by phomYd', the order of the other PTMs have not been elucidated yet. Most of the biosynthetic enzymes likely have broad substrate specificity, and thus, there might be a metabolic grid from a precursor to phomopsin A. The enzyme(s) responsible for the biosynthesis of 3,4-dehydrovaline (dVal) have also not been identified yet. Finally, phomM' acts as an S-adenosylmethionine-dependent alpha-N-methyltransferase that catalyzes two successive N-methylation reactions, converting N-desmethyl-phomopsin A to phomopsin A and phomopsin A further to an N,N-dimethylated congener called phomopsin E. This Diaporthe leptostromiformis (Lupinosis disease fungus) protein is UstYa family oxidase phomYc'.